A 557-amino-acid polypeptide reads, in one-letter code: Vacuolar protein sorting-associated protein 30 (557 aa).

Disordered stretches follow at residues 93–149 and 218–238; these read DDDN…ENQQ and NKEI…SEKE. Acidic residues predominate over residues 135-147; sequence DEEEQEATDEDEN. Threonine 142 bears the Phosphothreonine mark. Residues 189-322 adopt a coiled-coil conformation; it reads LINRLKSEYD…QLDKLRKINI (134 aa). The tract at residues 320–539 is BARA; sequence INIFNATFKI…LAFSSNLLSK (220 aa). Residues 515 to 540 are required for membrane-association, autophagic function during starvation and normal autophagosome morphology; the sequence is WTTAMKFLLTNVKWLLAFSSNLLSKS.

This sequence belongs to the beclin family. Component of the autophagy-specific VPS34 PI3-kinase complex I composed of VPS15, VPS30, VPS34, ATG14 and ATG38; and of the VPS34 PI3-kinase complex II composed of VPS15, VPS30, VPS34 and VPS38.

The protein localises to the endosome membrane. Its subcellular location is the vacuole membrane. It is found in the preautophagosomal structure membrane. Required for cytoplasm to vacuole transport (Cvt), autophagy, nucleophagy, and mitophagy, as a part of the autophagy-specific VPS34 PI3-kinase complex I. This complex is essential to recruit the ATG8-phosphatidylinositol conjugate and the ATG12-ATG5 conjugate to the pre-autophagosomal structure. Also involved in endosome-to-Golgi retrograde transport as part of the VPS34 PI3-kinase complex II. This second complex is required for the endosome-to-Golgi retrieval of PEP1 and KEX2, and the recruitment of VPS5 and VPS7, two components of the retromer complex, to endosomal membranes (probably through the synthesis of a specific pool of phosphatidylinositol 3-phosphate recruiting the retromer to the endosomes). Also plays a role in regulation of filamentous growth. The chain is Vacuolar protein sorting-associated protein 30 from Saccharomyces cerevisiae (strain ATCC 204508 / S288c) (Baker's yeast).